Consider the following 191-residue polypeptide: MSLVDQILGDGAVADLCLWKDKINSGITLVMATLFWFLLEFMEARLVPLLCSILLLLMLILFLWAKFGEVFFTRRPPTPEELNQPDSPLKALFSMMEGHLLMLYEIAYGKDNKTFLKTILYVAIIYNIGSYISLLTILYICLVCSMTIPVVYMQFQELIDSFMGKVSEEKNNLLEVFKQVVSKIPRAPKVE.

The Reticulon domain maps to 13 to 191 (VADLCLWKDK…SKIPRAPKVE (179 aa)). Helical transmembrane passes span 23–43 (INSG…EFME), 47–67 (VPLL…WAKF), and 122–142 (VAII…YICL).

It localises to the endoplasmic reticulum membrane. The chain is Reticulon-like protein B15 (RTNLB15) from Arabidopsis thaliana (Mouse-ear cress).